The primary structure comprises 313 residues: tRNA uridine(34) hydroxylase (313 aa).

One can recognise a Rhodanese domain in the interval 124 to 218 (SDPEVLLIDT…YLEEVPQEET (95 aa)). The active-site Cysteine persulfide intermediate is the Cys-178.

It belongs to the TrhO family.

The catalysed reaction is uridine(34) in tRNA + AH2 + O2 = 5-hydroxyuridine(34) in tRNA + A + H2O. Its function is as follows. Catalyzes oxygen-dependent 5-hydroxyuridine (ho5U) modification at position 34 in tRNAs. The sequence is that of tRNA uridine(34) hydroxylase from Pseudomonas fluorescens (strain Pf0-1).